Here is a 156-residue protein sequence, read N- to C-terminus: 6,7-dimethyl-8-ribityllumazine synthase (156 aa).

Residues Phe-22, 56–58, and 80–82 contribute to the 5-amino-6-(D-ribitylamino)uracil site; these read ALE and AVI. 85–86 is a binding site for (2S)-2-hydroxy-3-oxobutyl phosphate; it reads DT. Residue His-88 is the Proton donor of the active site. Position 113 (Phe-113) interacts with 5-amino-6-(D-ribitylamino)uracil. Arg-127 contributes to the (2S)-2-hydroxy-3-oxobutyl phosphate binding site.

This sequence belongs to the DMRL synthase family.

It catalyses the reaction (2S)-2-hydroxy-3-oxobutyl phosphate + 5-amino-6-(D-ribitylamino)uracil = 6,7-dimethyl-8-(1-D-ribityl)lumazine + phosphate + 2 H2O + H(+). The protein operates within cofactor biosynthesis; riboflavin biosynthesis; riboflavin from 2-hydroxy-3-oxobutyl phosphate and 5-amino-6-(D-ribitylamino)uracil: step 1/2. Catalyzes the formation of 6,7-dimethyl-8-ribityllumazine by condensation of 5-amino-6-(D-ribitylamino)uracil with 3,4-dihydroxy-2-butanone 4-phosphate. This is the penultimate step in the biosynthesis of riboflavin. This chain is 6,7-dimethyl-8-ribityllumazine synthase, found in Leuconostoc mesenteroides subsp. mesenteroides (strain ATCC 8293 / DSM 20343 / BCRC 11652 / CCM 1803 / JCM 6124 / NCDO 523 / NBRC 100496 / NCIMB 8023 / NCTC 12954 / NRRL B-1118 / 37Y).